The following is a 405-amino-acid chain: Obg-like ATPase homolog (405 aa).

Residues 17–283 (PTSGIVGLAN…CKGIASEYFD (267 aa)) form the OBG-type G domain. ATP is bound by residues 26–31 (NVGKST) and Val231. One can recognise a TGS domain in the interval 312-398 (NLISFFTCGP…QDNDIALFKA (87 aa)).

The protein belongs to the TRAFAC class OBG-HflX-like GTPase superfamily. OBG GTPase family.

The protein resides in the mitochondrion. Functionally, hydrolyzes ATP, and can also hydrolyze GTP with lower efficiency. Has lower affinity for GTP. In Saccharomyces cerevisiae (strain ATCC 204508 / S288c) (Baker's yeast), this protein is Obg-like ATPase homolog (YLF2).